A 424-amino-acid polypeptide reads, in one-letter code: Tyrosine--tRNA ligase (424 aa).

Tyr-37 lines the L-tyrosine pocket. Residues 42–51 (PTADSLHLGH) carry the 'HIGH' region motif. The L-tyrosine site is built by Tyr-175 and Gln-179. The 'KMSKS' region signature appears at 235 to 239 (KFGKT). Lys-238 contributes to the ATP binding site. Positions 357–414 (ADLQQALVNAELVPSRGQARTMISSNAVAINGEKQSDPEYAFTDADRLFGRYTLLRRG) constitute an S4 RNA-binding domain.

The protein belongs to the class-I aminoacyl-tRNA synthetase family. TyrS type 1 subfamily. In terms of assembly, homodimer.

The protein resides in the cytoplasm. The catalysed reaction is tRNA(Tyr) + L-tyrosine + ATP = L-tyrosyl-tRNA(Tyr) + AMP + diphosphate + H(+). In terms of biological role, catalyzes the attachment of tyrosine to tRNA(Tyr) in a two-step reaction: tyrosine is first activated by ATP to form Tyr-AMP and then transferred to the acceptor end of tRNA(Tyr). The sequence is that of Tyrosine--tRNA ligase from Yersinia enterocolitica serotype O:8 / biotype 1B (strain NCTC 13174 / 8081).